The chain runs to 1174 residues: Protein kinase C-like (1174 aa).

The REM-1 1 domain occupies 1-68 (MANVEETVAN…LRDLDLQRTT (68 aa)). Residues 69–84 (SGVDNMSLQPGRSPTN) are compositionally biased toward polar residues. Residues 69 to 140 (SGVDNMSLQP…PPPATANKRP (72 aa)) are disordered. Over residues 96-123 (GYAQQDQGGYGGPQSQYSQLSGGEALQP) the composition is skewed to low complexity. A compositionally biased stretch (pro residues) spans 124–134 (PRAPFAAPPPA). The REM-1 2 domain occupies 149–226 (KYDTPHLGPR…LKRYEDLHVD (78 aa)). Residues 229 to 349 (GDGDDNDSLD…MRRKKLETEL (121 aa)) enclose the C2 domain. Residues 358–406 (DKMGGHTGIQPDMQFQPPPGQSPAGGPGGGPTPAGVRPPGAPQPQTGPI) form a disordered region. Residues 380–389 (PAGGPGGGPT) are compositionally biased toward gly residues. 2 Phorbol-ester/DAG-type zinc fingers span residues 458–506 (GHKF…VTKC) and 526–576 (PHRF…PDFC). Residues 593 to 842 (TRRGQSSSGP…PAANTQGTGK (250 aa)) form a disordered region. Over residues 596 to 611 (GQSSSGPGMSQRTLRP) the composition is skewed to polar residues. Positions 624–636 (QSPGQPGQESPTQ) are enriched in low complexity. The span at 648–657 (SPPPGPPRQP) shows a compositional bias: pro residues. Positions 658 to 709 (SYPSSATSVDAARASYSTTGTASTGAPTSPTSGSRPPSGPRTQSSVAAAAAA) are enriched in low complexity. The segment covering 720-744 (RSNTDYSPQSGRSSGSGYPTEQRMS) has biased composition (polar residues). The span at 786 to 802 (LPQPPPPQSPPQHPQQP) shows a compositional bias: pro residues. Polar residues predominate over residues 808–820 (KMPEQQALTQQPP). Residues 849–1108 (FNFLAVLGKG…AQEIMSHAFF (260 aa)) form the Protein kinase domain. Residues 855 to 863 (LGKGNFGKV) and Lys878 contribute to the ATP site. Catalysis depends on Asp974, which acts as the Proton acceptor. Positions 1109-1174 (RNINWDDIYH…RGFSYSADFA (66 aa)) constitute an AGC-kinase C-terminal domain.

It belongs to the protein kinase superfamily. AGC Ser/Thr protein kinase family. PKC subfamily.

The catalysed reaction is L-seryl-[protein] + ATP = O-phospho-L-seryl-[protein] + ADP + H(+). It catalyses the reaction L-threonyl-[protein] + ATP = O-phospho-L-threonyl-[protein] + ADP + H(+). This Cochliobolus heterostrophus (Southern corn leaf blight fungus) protein is Protein kinase C-like (PKC1).